The primary structure comprises 329 residues: MSMKQPVRVAVTGAAGNISYAMLFRIASGEMLGKDQPVILQLLEIAPALDALKGVVMELEDCAFPLLAGVVQTDDATVAFKDVDYALLVGSRPRGPGMERKDLLEANAAIFSAQGKALNDVASRDVKVLVVGNPANTNAVIAQRNAPDLDPRNFTAMTRLDHNRAMAQLAGKTDSTVNDVKKMIIWGNHSSTQYPDLTASTVNGKPALDLVDRAWYEGTYIPEVQQRGAAIIKARGASSAASAANAAIAHVRTWVMGTDENDWVSMGVYSNGEYGIAKGLIYSFPVTCANGDWSIVDGVDVSSDFSKEKMAATEQELSEERDAVAHLLP.

Position 13–19 (13–19 (GAAGNIS)) interacts with NAD(+). Substrate is bound by residues Arg-94 and Arg-100. NAD(+)-binding positions include Asn-107, Gln-114, and 131–133 (VGN). Substrate contacts are provided by Asn-133 and Arg-164. His-189 acts as the Proton acceptor in catalysis.

It belongs to the LDH/MDH superfamily. MDH type 2 family.

The enzyme catalyses (S)-malate + NAD(+) = oxaloacetate + NADH + H(+). Its function is as follows. Catalyzes the reversible oxidation of malate to oxaloacetate. The protein is Malate dehydrogenase of Psychrobacter cryohalolentis (strain ATCC BAA-1226 / DSM 17306 / VKM B-2378 / K5).